The following is a 241-amino-acid chain: DNA repair protein RecO (241 aa).

This sequence belongs to the RecO family.

In terms of biological role, involved in DNA repair and RecF pathway recombination. The chain is DNA repair protein RecO from Yersinia enterocolitica serotype O:8 / biotype 1B (strain NCTC 13174 / 8081).